Consider the following 584-residue polypeptide: 2-succinyl-5-enolpyruvyl-6-hydroxy-3-cyclohexene-1-carboxylate synthase (584 aa).

This sequence belongs to the TPP enzyme family. MenD subfamily. Homodimer. The cofactor is Mg(2+). Requires Mn(2+) as cofactor. Thiamine diphosphate serves as cofactor.

The enzyme catalyses isochorismate + 2-oxoglutarate + H(+) = 5-enolpyruvoyl-6-hydroxy-2-succinyl-cyclohex-3-ene-1-carboxylate + CO2. It functions in the pathway quinol/quinone metabolism; 1,4-dihydroxy-2-naphthoate biosynthesis; 1,4-dihydroxy-2-naphthoate from chorismate: step 2/7. Its pathway is quinol/quinone metabolism; menaquinone biosynthesis. Its function is as follows. Catalyzes the thiamine diphosphate-dependent decarboxylation of 2-oxoglutarate and the subsequent addition of the resulting succinic semialdehyde-thiamine pyrophosphate anion to isochorismate to yield 2-succinyl-5-enolpyruvyl-6-hydroxy-3-cyclohexene-1-carboxylate (SEPHCHC). The sequence is that of 2-succinyl-5-enolpyruvyl-6-hydroxy-3-cyclohexene-1-carboxylate synthase from Bacillus thuringiensis (strain Al Hakam).